The following is a 406-amino-acid chain: Lysine-specific demethylase 8 (406 aa).

Positions 143-152 (KAERSEEPFS) are enriched in basic and acidic residues. Residues 143–162 (KAERSEEPFSKKRKHDCKSE) are disordered. The JmjC domain maps to 270 to 406 (DQVPELKEDI…LSFSVSFWWS (137 aa)). Histidine 311 and aspartate 313 together coordinate Fe cation.

Requires Fe(2+) as cofactor.

The protein resides in the nucleus. The catalysed reaction is N(6),N(6)-dimethyl-L-lysyl(36)-[histone H3] + 2 2-oxoglutarate + 2 O2 = L-lysyl(36)-[histone H3] + 2 formaldehyde + 2 succinate + 2 CO2. Functionally, histone demethylase required for G2/M phase cell cycle progression. Specifically demethylates dimethylated 'Lys-36' (H3K36me2) of histone H3, an epigenetic repressive mark, thereby acting as a transcription activator. May play a role in the regulation of the circadian clock. The chain is Lysine-specific demethylase 8 (kdm8) from Danio rerio (Zebrafish).